Here is an 887-residue protein sequence, read N- to C-terminus: PAN2-PAN3 deadenylation complex subunit Pan3 (887 aa).

The C3H1-type zinc-finger motif lies at 49–77 (GVKLKYCRYYAKDKTCFYGEECQFLHEDP). Disordered stretches follow at residues 111 to 139 (GGGAGPPAGPKKPELGVPGAATAGGGLDG), 280 to 307 (ENNLQTPNPTASEFIPKGGSTSRLSNVS), and 321 to 393 (PSMG…GQVI). The interval 147 to 498 (MDGGALTDAS…PPPNRIQKSS (352 aa)) is necessary and sufficient for interaction with PABPC1 but not needed for interaction with PAN2. Polar residues-rich tracts occupy residues 281-290 (NNLQTPNPTA) and 298-307 (GSTSRLSNVS). A PABPC-interacting motif-2 (PAM-2) motif is present at residues 284–299 (QTPNPTASEFIPKGGS). Phosphoserine is present on residues serine 354 and serine 361. The pseudokinase domain stretch occupies residues 463–750 (QIDQADMPAV…SVNDIMPMIG (288 aa)). ATP-binding positions include arginine 521, 570-577 (DFHAGGET), and 644-645 (TK). The segment at 789 to 887 (TINERPEFQK…ELIAAANGQL (99 aa)) is knob domain.

Belongs to the protein kinase superfamily. PAN3 family. Homodimer. Forms a heterotrimer with a catalytic subunit PAN2 to form the poly(A)-nuclease (PAN) deadenylation complex. Interacts (via PAM-2 motif) with poly(A)-binding protein PABPC1 (via PABC domain), conferring substrate specificity of the enzyme complex. Interacts with the GW182 family proteins TNRC6A, TNRC6B and TNRC6C. Interacts with YTHDF3. In terms of assembly, interacts with PAN2. Interacts (via N-terminus) with PABPC1 at lower efficiency than isoform 3. As to quaternary structure, interacts with PAN2. Interacts (via N-terminus) with PABPC1 at higher efficiency than isoform 1.

The protein resides in the cytoplasm. The protein localises to the P-body. It localises to the nucleus. Functionally, regulatory subunit of the poly(A)-nuclease (PAN) deadenylation complex, one of two cytoplasmic mRNA deadenylases involved in general and miRNA-mediated mRNA turnover. PAN specifically shortens poly(A) tails of RNA and the activity is stimulated by poly(A)-binding protein (PABP). PAN deadenylation is followed by rapid degradation of the shortened mRNA tails by the CCR4-NOT complex. Deadenylated mRNAs are then degraded by two alternative mechanisms, namely exosome-mediated 3'-5' exonucleolytic degradation, or deadenylation-dependent mRNA decapping and subsequent 5'-3' exonucleolytic degradation by XRN1. PAN3 acts as a regulator for PAN activity, recruiting the catalytic subunit PAN2 to mRNA via its interaction with RNA and PABP, and to miRNA targets via its interaction with GW182 family proteins. Decreases PAN2-mediated deadenylation, possibly by preventing progression into the second CCR4-NOT mediated stage of biphasic deadenylation. Has a significant effect on mRNA stability, generally stabilizing a subset of the transcriptome. Stabilizes mRNAs degraded by the AU-rich element (ARE)-mediated mRNA decay pathway but promotes degradation of mRNAs by the microRNA-mediated pathway. Its activity influences mRNP remodeling, specifically reducing formation of a subset of P-bodies containing GW220, an isoform of TNRC6A. In terms of biological role, enhances PAN2 deadenylase activity and has an extensive effect on mRNA stability, generally enhancing mRNA decay across the transcriptome by multiple pathways, including the AU-rich element (ARE)-mediated pathway, microRNA-mediated pathway and the nonsense-mediated pathway (NMD). Its activity is required for efficient P-body formation. May be involved in regulating mRNAs of genes involved in cell cycle progression and cell proliferation. The protein is PAN2-PAN3 deadenylation complex subunit Pan3 of Mus musculus (Mouse).